The sequence spans 134 residues: UPF0412 protein YaaI (134 aa).

The N-terminal stretch at 1 to 23 (MKSVFTISASLAISLMLCCTAQA) is a signal peptide.

The protein belongs to the UPF0412 family.

The sequence is that of UPF0412 protein YaaI from Shigella dysenteriae serotype 1 (strain Sd197).